A 1588-amino-acid chain; its full sequence is RB1-inducible coiled-coil protein 1 (1588 aa).

Ser-222, Ser-229, and Ser-237 each carry phosphoserine. At Thr-238 the chain carries Phosphothreonine. Phosphoserine occurs at positions 243, 253, 257, and 261. A Nuclear localization signal motif is present at residues 565–568 (KPRK). Ser-623, Ser-646, Ser-649, Ser-652, Ser-733, Ser-1087, Ser-1366, and Ser-1478 each carry phosphoserine. The segment at 638 to 674 (QKVSTSQASPQSAASPRIESTTGITTTTSPKTPPPLT) is disordered. Positions 643–667 (SQASPQSAASPRIESTTGITTTTSP) are enriched in low complexity. The FFAT motif lies at 730–736 (DFMSAVN). 2 coiled-coil regions span residues 858 to 1393 (LKEK…TSSF) and 1440 to 1479 (SVQE…SQSL).

Part of a complex containing ATG13/KIAA0652, ULK1 and RB1CC1. This complex associates with ATG101. Interacts with PTK2/FAK1 and PTK2B/PYK2. Interacts with GABARAP and GABARAPL1. Interacts with ATG16L1; the interaction is required for ULK1 complex-dependent autophagy. Interacts with RNF111, SKI and SMAD7. Interacts with COP1 in the cytoplasm of proliferating cells in response to UV stimulation. Interacts with TP53. Interacts with C9orf72. Interacts with WDR45B. Interacts with ATG13; this interaction is increased in the absence of TMEM39A. Interacts with WIPI2. Interacts with TAX1BP1. Interacts (via phosphorylated FFAT motif) with MOSPD2. Post-translationally, phosphorylation at Ser-733 of the FFAT motif activates interaction with MOSPD2. Expressed abundantly in heart and testis, and moderately in kidney, liver and skeletal muscles. Very low expression levels in lung and spleen. Colocalizes with RB1 in various tissues.

It localises to the nucleus. Its subcellular location is the cytoplasm. It is found in the cytosol. The protein resides in the preautophagosomal structure. The protein localises to the lysosome. Functionally, involved in autophagy. Regulates early events but also late events of autophagosome formation through direct interaction with Atg16L1. Required for the formation of the autophagosome-like double-membrane structure that surrounds the Salmonella-containing vacuole (SCV) during S.typhimurium infection and subsequent xenophagy. Involved in repair of DNA damage caused by ionizing radiation, which subsequently improves cell survival by decreasing apoptosis. Inhibits PTK2/FAK1 and PTK2B/PYK2 kinase activity, affecting their downstream signaling pathways. Plays a role as a modulator of TGF-beta-signaling by restricting substrate specificity of RNF111. Functions as a DNA-binding transcription factor. Is a potent regulator of the RB1 pathway through induction of RB1 expression. Plays a crucial role in muscular differentiation. Plays an indispensable role in fetal hematopoiesis and in the regulation of neuronal homeostasis. This chain is RB1-inducible coiled-coil protein 1, found in Mus musculus (Mouse).